The chain runs to 230 residues: Ribonuclease 3 (230 aa).

The 121-residue stretch at Y5–D125 folds into the RNase III domain. E40 is a Mg(2+) binding site. The active site involves D44. Residues D111 and E114 each coordinate Mg(2+). E114 is an active-site residue. Residues D153–Q223 enclose the DRBM domain.

Belongs to the ribonuclease III family. In terms of assembly, homodimer. The cofactor is Mg(2+).

It localises to the cytoplasm. It catalyses the reaction Endonucleolytic cleavage to 5'-phosphomonoester.. Digests double-stranded RNA. Involved in the processing of primary rRNA transcript to yield the immediate precursors to the large and small rRNAs (23S and 16S). Processes some mRNAs, and tRNAs when they are encoded in the rRNA operon. Processes pre-crRNA and tracrRNA of type II CRISPR loci if present in the organism. This Francisella philomiragia subsp. philomiragia (strain ATCC 25017 / CCUG 19701 / FSC 153 / O#319-036) protein is Ribonuclease 3.